Reading from the N-terminus, the 66-residue chain is UPF0337 protein SpyM3_0896 (66 aa).

This sequence belongs to the UPF0337 (CsbD) family.

This is UPF0337 protein SpyM3_0896 from Streptococcus pyogenes serotype M3 (strain ATCC BAA-595 / MGAS315).